Consider the following 721-residue polypeptide: Vacuolar transporter chaperone complex subunit 4 (721 aa).

Positions 1 to 148 constitute an SPX domain; it reads MKFGEHLSKS…GFILKPVFQV (148 aa). Residues 1–630 are Cytoplasmic-facing; the sequence is MKFGEHLSKS…PKVYFATERT (630 aa). Lysine 75 participates in a covalent cross-link: Glycyl lysine isopeptide (Lys-Gly) (interchain with G-Cter in ubiquitin). The tract at residues 126–133 is important for inositol polyphosphate binding; sequence GFQKIIKK. The ATP site is built by lysine 200, arginine 264, arginine 266, lysine 281, lysine 294, tyrosine 359, and arginine 361. Glutamate 426 lines the Mn(2+) pocket. The active site involves lysine 458. Residues 489 to 512 form a disordered region; the sequence is PLPTNIEITRPGRSDNEDNDFDED. 2 helical membrane passes run 631-651 and 652-672; these read YLSWLSISILLGGVSTTLLTY and GSPTAMIGSIGFFITSLAVLI. Residues 673-699 lie on the Cytoplasmic side of the membrane; that stretch reads RTVMVYAKRVVNIRLKRAVDYEDKIGP. A helical membrane pass occupies residues 700 to 720; sequence GMVSVFLILSILFSFFCNLVA. Residue lysine 721 is a topological domain, vacuolar.

The protein belongs to the VTC4 family. The VTC core complex is an integral membrane heterooligomer composed of the catalytic subunit VTC4 and the accessory subunits VTC1, VTC2 and VTC3. The complex exists in 2 different sub-complexes: VTC1-VTC2-VCT4 and VCT1-VTC3-VTC4. The VCT1-VTC3-VTC4 subcomplex is mostly found on the vacuolar membrane. The VTC1-VTC2-VCT4 subcomplex is observed in the cell periphery, probably ER and nuclear envelope, but localizes to the vacuole under phosphate starvation. Each subunit contains 3 transmembrane helices. VTC1 is a small membrane protein without hydrophilic domain. VTC2, VTC3 and VTC4 are related and have 2 hydrophilic domains that face the cytosol, an N-terminal SPX domain and the central core domain. The central core in VTC4 is the catalytic domain, with the essential catalytic lysine replaced by isoleucine and leucine in VTC2 and VTC3, respectively. The core complex associates with the accessory subunit VTC5. The complex interacts with the v-SNARE NYV1 and with the V(0) subunit of V-ATPase VPH1. The cofactor is Mn(2+).

It is found in the vacuole membrane. It localises to the cytoplasm. The protein resides in the cell cortex. The protein localises to the endoplasmic reticulum membrane. Its subcellular location is the cytoplasmic vesicle. It is found in the autophagosome membrane. The enzyme catalyses [phosphate](n) + ATP = [phosphate](n+1) + ADP. Activity of the enzyme is Mn(2+)-dependent and enhanced in the presence of pyrophosphate (PPi). Catalytic subunit of the vacuolar transporter chaperone (VTC) complex. The VTC complex acts as a vacuolar polyphosphate polymerase that catalyzes the synthesis of inorganic polyphosphate (polyP) via transfer of phosphate from ATP to a growing polyP chain, releasing ADP. VTC exposes its catalytic domain VTC4 to the cytosol, where the growing polyP chain winds through a tunnel-shaped pocket, integrating cytoplasmic polymer synthesis with polyP membrane translocation. The VTC complex carries 9 vacuolar transmembrane domains, which are likely to constitute the translocation channel into the organelle lumen. PolyP synthesis is tightly coupled to its transport into the vacuole lumen, in order to avoid otherwise toxic intermediates in the cytosol, and it depends on the proton gradient across the membrane, formed by V-ATPase. The VTC complex also plays a role in vacuolar membrane fusion. Required for SEC18/NSF activity in SNARE priming, membrane binding of LMA1 and V(0) trans-complex formation. Binds inositol hexakisphosphate (Ins6P) and similar inositol polyphosphates, such as 5-diphospho-inositol pentakisphosphate (5-InsP7); these are important intracellular signaling molecules. Inositol polyphosphate binding promotes vacuolar polyphosphate synthesis. The VTC complex is required for microautophagy. It is a constituent of autophagic tubes and is required for scission of microautophagic vesicles from these tubes. The polypeptide is Vacuolar transporter chaperone complex subunit 4 (Saccharomyces cerevisiae (strain ATCC 204508 / S288c) (Baker's yeast)).